Reading from the N-terminus, the 308-residue chain is Apolipoprotein F (308 aa).

This sequence belongs to the apolipoprotein F family.

The protein localises to the secreted. In terms of biological role, minor apolipoprotein that associates with LDL. Inhibits cholesteryl ester transfer protein (CETP) activity and appears to be an important regulator of cholesterol transport. Also associates to a lesser degree with VLDL, Apo-AI and Apo-AII. The chain is Apolipoprotein F (Apof) from Rattus norvegicus (Rat).